The primary structure comprises 470 residues: Protein C-ets-2 (470 aa).

One can recognise a PNT domain in the interval 85–170 (ATFSGFKKEQ…EHLEQMIKEN (86 aa)). Ser-225 is modified (phosphoserine). A disordered region spans residues 270–291 (ASGKPRDHDSAETGGDSFESSE). Phosphoserine is present on residues Ser-296, Ser-299, and Ser-302. A DNA-binding region (ETS) is located at residues 364–444 (IQLWQFLLEL…SGKRYVYRFV (81 aa)).

It belongs to the ETS family. In terms of processing, phosphorylation by CDK10 at Ser-225 may create a phosphodegron that targets ETS2 for proteasomal degradation.

The protein resides in the nucleus. In terms of biological role, transcription factor activating transcription. Binds specifically the GGA DNA motif in gene promoters and stimulates transcription of those genes. The chain is Protein C-ets-2 (ETS2) from Bos taurus (Bovine).